We begin with the raw amino-acid sequence, 287 residues long: Elongation factor Ts (287 aa).

An involved in Mg(2+) ion dislocation from EF-Tu region spans residues 81 to 84 (TDFV).

Belongs to the EF-Ts family.

The protein resides in the cytoplasm. Its function is as follows. Associates with the EF-Tu.GDP complex and induces the exchange of GDP to GTP. It remains bound to the aminoacyl-tRNA.EF-Tu.GTP complex up to the GTP hydrolysis stage on the ribosome. The chain is Elongation factor Ts from Nitratidesulfovibrio vulgaris (strain ATCC 29579 / DSM 644 / CCUG 34227 / NCIMB 8303 / VKM B-1760 / Hildenborough) (Desulfovibrio vulgaris).